Here is a 300-residue protein sequence, read N- to C-terminus: 4-diphosphocytidyl-2-C-methyl-D-erythritol kinase (300 aa).

Lys-22 is a catalytic residue. 105–115 provides a ligand contact to ATP; the sequence is PMGGGLGGGSS. Asp-147 is an active-site residue.

Belongs to the GHMP kinase family. IspE subfamily.

It carries out the reaction 4-CDP-2-C-methyl-D-erythritol + ATP = 4-CDP-2-C-methyl-D-erythritol 2-phosphate + ADP + H(+). It functions in the pathway isoprenoid biosynthesis; isopentenyl diphosphate biosynthesis via DXP pathway; isopentenyl diphosphate from 1-deoxy-D-xylulose 5-phosphate: step 3/6. Its function is as follows. Catalyzes the phosphorylation of the position 2 hydroxy group of 4-diphosphocytidyl-2C-methyl-D-erythritol. The polypeptide is 4-diphosphocytidyl-2-C-methyl-D-erythritol kinase (Colwellia psychrerythraea (strain 34H / ATCC BAA-681) (Vibrio psychroerythus)).